Consider the following 289-residue polypeptide: MQVFPPPQVPLLGAHTSTAGGLHNAIYEGQEIGASTIQMFTANQRQWRRRPLTDSLINSFKTALKETSLSYIMSHAGYLINPGSPNPEILEKSRICIQQEIQDCISLGINFVNFHPGAAVNDTKETCLDRIISSFSLMEPLFENSPPLVVLFETTAGQGTLVGSNFEELSYLIDNLNHKIPVGVCIDTCHIFAAGYDITSPESWKRVLKNFDDVIGLSYLRAFHLNDSMFPLGQHKDRHAPLGEGDIGIESFKFLMTNEDTRMIPKYLETPGGPDLWAKEIRQLQSFQK.

Zn(2+) is bound by residues histidine 75, histidine 115, glutamate 153, aspartate 187, histidine 190, histidine 224, aspartate 237, histidine 239, and glutamate 269.

Belongs to the AP endonuclease 2 family. Requires Zn(2+) as cofactor.

The enzyme catalyses Endonucleolytic cleavage to 5'-phosphooligonucleotide end-products.. Its function is as follows. Endonuclease IV plays a role in DNA repair. It cleaves phosphodiester bonds at apurinic or apyrimidinic (AP) sites, generating a 3'-hydroxyl group and a 5'-terminal sugar phosphate. The polypeptide is Probable endonuclease 4 (Chlamydia caviae (strain ATCC VR-813 / DSM 19441 / 03DC25 / GPIC) (Chlamydophila caviae)).